The sequence spans 262 residues: Type III pantothenate kinase (262 aa).

12-19 is an ATP binding site; the sequence is DIGNTSIA. Substrate contacts are provided by residues Y94 and 109 to 112; that span reads GSDV. Catalysis depends on D111, which acts as the Proton acceptor. D132 serves as a coordination point for K(+). Residue T135 participates in ATP binding. T187 lines the substrate pocket.

Belongs to the type III pantothenate kinase family. In terms of assembly, homodimer. Requires NH4(+) as cofactor. The cofactor is K(+).

Its subcellular location is the cytoplasm. It carries out the reaction (R)-pantothenate + ATP = (R)-4'-phosphopantothenate + ADP + H(+). Its pathway is cofactor biosynthesis; coenzyme A biosynthesis; CoA from (R)-pantothenate: step 1/5. Catalyzes the phosphorylation of pantothenate (Pan), the first step in CoA biosynthesis. In Borreliella burgdorferi (strain ATCC 35210 / DSM 4680 / CIP 102532 / B31) (Borrelia burgdorferi), this protein is Type III pantothenate kinase.